Consider the following 1093-residue polypeptide: Small G protein signaling modulator 1 (1093 aa).

The RUN domain occupies 36–190; that stretch reads HEDSSHIISF…EYTKMKTADH (155 aa). Residues 256–297 form an important for interaction with RAB9A and RAB9B region; that stretch reads LLYGKNNVLVQPRDDMEAVPGYLSLHQTADVMTLKWTPNQLM. A required for interaction with RAP family members region spans residues 301–350; the sequence is VGDLDYEKSVYWDYAVTIRLEEIVYLHCHQQVDSGGTVVLVSQDGIQRPP. Disordered stretches follow at residues 377–412, 645–778, and 810–838; these read DPPLWSQRGKGKVFPKLRKRSPQGSSESTSSDKEDD, DSTI…ELAV, and DGAVMDGWPGEADKPSRADSEDNLSEEPE. A compositionally biased stretch (basic residues) spans 385 to 397; the sequence is GKGKVFPKLRKRS. Positions 562–1026 constitute a Rab-GAP TBC domain; that stretch reads GVQPEIRRAV…SVWETIWAAK (465 aa). Residues 647 to 676 are compositionally biased toward polar residues; that stretch reads TISNESSQSCSSGRQNLRLQSDSSSSTQVF. The segment covering 687–696 has biased composition (basic and acidic residues); the sequence is AEGRSEEKHP. Positions 702 to 736 are enriched in polar residues; that stretch reads NPANGTCSPDSGHPSSHNFSSGLSEHSEPSLSTED. 2 stretches are compositionally biased toward basic and acidic residues: residues 766 to 776 and 820 to 829; these read TSRDEAPREEL and EADKPSRADS.

Belongs to the RUTBC family. Interacts with RAB9A (GTP-bound form) and RAB9B. Interacts with RAB3A, RAB4A, RAB5A, RAB8A, RAB11A, RAP1A, RAP1B, RAP2A and RAP2B. No interaction with RAB27A. Expressed only in brain.

Its subcellular location is the golgi apparatus. The protein resides in the trans-Golgi network. It localises to the cytoplasm. The protein localises to the cytoplasmic vesicle membrane. Its function is as follows. Interacts with numerous Rab family members, functioning as Rab effector for some, and as GTPase activator for others. Promotes GTP hydrolysis by RAB34 and RAB36. Probably functions as a GTPase effector with RAB9A and RAB9B; does not stimulate GTP hydrolysis with RAB9A and RAB9B. The sequence is that of Small G protein signaling modulator 1 (Sgsm1) from Mus musculus (Mouse).